The sequence spans 88 residues: Small ribosomal subunit protein uS17c (88 aa).

The protein belongs to the universal ribosomal protein uS17 family. As to quaternary structure, part of the 30S ribosomal subunit.

It is found in the plastid. The protein resides in the cyanelle. Its function is as follows. One of the primary rRNA binding proteins, it binds specifically to the 5'-end of 16S ribosomal RNA. In Cyanophora paradoxa, this protein is Small ribosomal subunit protein uS17c (rps17).